Consider the following 965-residue polypeptide: Probable serine/threonine-protein kinase DDB_G0291516 (965 aa).

The interval 114–170 (KDSQKELLPSPQQLTPPTSLPSLPLLPLPQAPEQNEEQQLTQPPSPPSIPPPPPQKK) is disordered. Composition is skewed to low complexity over residues 119–136 (ELLP…LPSL) and 144–155 (APEQNEEQQLTQ). A compositionally biased stretch (pro residues) spans 156–168 (PPSPPSIPPPPPQ). ANK repeat units lie at residues 271 to 301 (KGET…HMGI) and 310 to 339 (LNKN…PLKM). Residues 459 to 739 (IDFHTQIGSA…NVKAIKKEFL (281 aa)) form the Protein kinase domain. ATP contacts are provided by residues 465 to 473 (IGSAGNASV) and Lys-486. Residue Asp-587 is the Proton acceptor of the active site. The helical transmembrane segment at 653-673 (IYSLGIILWELVCVAMTGTYI) threads the bilayer. N-linked (GlcNAc...) asparagine glycosylation is found at Asn-760, Asn-765, Asn-905, Asn-909, Asn-910, Asn-914, Asn-934, and Asn-938. A compositionally biased stretch (low complexity) spans 881–940 (NINKNKNNNNNNNNNNNNNNNINNNNTFNNSTNNNSNDNINIPYDFNNNNNNNNNSCNNS). Positions 881–942 (NINKNKNNNN…NNNSCNNSKK (62 aa)) are disordered.

It belongs to the protein kinase superfamily. Ser/Thr protein kinase family.

Its subcellular location is the membrane. It carries out the reaction L-seryl-[protein] + ATP = O-phospho-L-seryl-[protein] + ADP + H(+). It catalyses the reaction L-threonyl-[protein] + ATP = O-phospho-L-threonyl-[protein] + ADP + H(+). This is Probable serine/threonine-protein kinase DDB_G0291516 from Dictyostelium discoideum (Social amoeba).